The sequence spans 160 residues: D-aminoacyl-tRNA deacylase (160 aa).

The short motif at 146 to 147 is the Gly-cisPro motif, important for rejection of L-amino acids element; that stretch reads GP.

This sequence belongs to the DTD family. Homodimer.

The protein localises to the cytoplasm. The catalysed reaction is glycyl-tRNA(Ala) + H2O = tRNA(Ala) + glycine + H(+). It catalyses the reaction a D-aminoacyl-tRNA + H2O = a tRNA + a D-alpha-amino acid + H(+). An aminoacyl-tRNA editing enzyme that deacylates mischarged D-aminoacyl-tRNAs. Also deacylates mischarged glycyl-tRNA(Ala), protecting cells against glycine mischarging by AlaRS. Acts via tRNA-based rather than protein-based catalysis; rejects L-amino acids rather than detecting D-amino acids in the active site. By recycling D-aminoacyl-tRNA to D-amino acids and free tRNA molecules, this enzyme counteracts the toxicity associated with the formation of D-aminoacyl-tRNA entities in vivo and helps enforce protein L-homochirality. This Desulfovibrio desulfuricans (strain ATCC 27774 / DSM 6949 / MB) protein is D-aminoacyl-tRNA deacylase.